Reading from the N-terminus, the 44-residue chain is Putative protein PsbN (44 aa).

A helical membrane pass occupies residues 3-23 (IISFLSTIFLGFFIISTTIYS).

This sequence belongs to the PsbN family.

It localises to the plastid. It is found in the chloroplast thylakoid membrane. Its function is as follows. May play a role in photosystem I and II biogenesis. In Euglena gracilis, this protein is Putative protein PsbN.